The primary structure comprises 316 residues: 4-hydroxy-3-methylbut-2-enyl diphosphate reductase (316 aa).

Cysteine 12 provides a ligand contact to [4Fe-4S] cluster. Residues histidine 41 and histidine 74 each contribute to the (2E)-4-hydroxy-3-methylbut-2-enyl diphosphate site. Residues histidine 41 and histidine 74 each contribute to the dimethylallyl diphosphate site. Residues histidine 41 and histidine 74 each coordinate isopentenyl diphosphate. Cysteine 96 is a [4Fe-4S] cluster binding site. (2E)-4-hydroxy-3-methylbut-2-enyl diphosphate is bound at residue histidine 124. Residue histidine 124 coordinates dimethylallyl diphosphate. Residue histidine 124 participates in isopentenyl diphosphate binding. Glutamate 126 functions as the Proton donor in the catalytic mechanism. A (2E)-4-hydroxy-3-methylbut-2-enyl diphosphate-binding site is contributed by threonine 168. Residue cysteine 198 coordinates [4Fe-4S] cluster. (2E)-4-hydroxy-3-methylbut-2-enyl diphosphate is bound by residues serine 226, serine 227, asparagine 228, and serine 270. The dimethylallyl diphosphate site is built by serine 226, serine 227, asparagine 228, and serine 270. The isopentenyl diphosphate site is built by serine 226, serine 227, asparagine 228, and serine 270.

This sequence belongs to the IspH family. [4Fe-4S] cluster is required as a cofactor.

The catalysed reaction is isopentenyl diphosphate + 2 oxidized [2Fe-2S]-[ferredoxin] + H2O = (2E)-4-hydroxy-3-methylbut-2-enyl diphosphate + 2 reduced [2Fe-2S]-[ferredoxin] + 2 H(+). It carries out the reaction dimethylallyl diphosphate + 2 oxidized [2Fe-2S]-[ferredoxin] + H2O = (2E)-4-hydroxy-3-methylbut-2-enyl diphosphate + 2 reduced [2Fe-2S]-[ferredoxin] + 2 H(+). It participates in isoprenoid biosynthesis; dimethylallyl diphosphate biosynthesis; dimethylallyl diphosphate from (2E)-4-hydroxy-3-methylbutenyl diphosphate: step 1/1. The protein operates within isoprenoid biosynthesis; isopentenyl diphosphate biosynthesis via DXP pathway; isopentenyl diphosphate from 1-deoxy-D-xylulose 5-phosphate: step 6/6. Its function is as follows. Catalyzes the conversion of 1-hydroxy-2-methyl-2-(E)-butenyl 4-diphosphate (HMBPP) into a mixture of isopentenyl diphosphate (IPP) and dimethylallyl diphosphate (DMAPP). Acts in the terminal step of the DOXP/MEP pathway for isoprenoid precursor biosynthesis. This Acinetobacter baumannii (strain AB307-0294) protein is 4-hydroxy-3-methylbut-2-enyl diphosphate reductase.